The following is a 531-amino-acid chain: Dihydropyrimidinase (531 aa).

Zn(2+) is bound by residues histidine 103, histidine 105, and lysine 193. Lysine 193 is subject to N6-carboxylysine. Tyrosine 198 is a substrate binding site. Residues histidine 226 and histidine 282 each coordinate Zn(2+). A substrate-binding site is contributed by serine 332. Aspartate 359 lines the Zn(2+) pocket. Asparagine 380 is a binding site for substrate.

Belongs to the metallo-dependent hydrolases superfamily. Hydantoinase/dihydropyrimidinase family. Homotetramer. Zn(2+) is required as a cofactor. Carboxylation allows a single lysine to coordinate two zinc ions.

The protein resides in the endoplasmic reticulum. The enzyme catalyses 5,6-dihydrouracil + H2O = 3-(carbamoylamino)propanoate + H(+). It functions in the pathway amino-acid biosynthesis; beta-alanine biosynthesis. Catalyzes the second step of the reductive pyrimidine degradation, the reversible hydrolytic ring opening of dihydropyrimidines. Can catalyze the ring opening of 5,6-dihydrouracil to N-carbamoyl-alanine and of 5,6-dihydrothymine to N-carbamoyl-amino isobutyrate. Involved in the recycling of nitrogen from nucleobases to general nitrogen metabolism. The polypeptide is Dihydropyrimidinase (Arabidopsis thaliana (Mouse-ear cress)).